A 309-amino-acid chain; its full sequence is Probable copper-dependent oxygenase clz3 (309 aa).

N-linked (GlcNAc...) asparagine glycosylation is found at Asn9 and Asn249. The chain crosses the membrane as a helical span at residues 257–277 (FAVPLAAIAFIALIISGGYVI).

It belongs to the clz3 oxygenase family.

It localises to the membrane. It participates in secondary metabolite biosynthesis. Functionally, probable copper-dependent oxygenase; part of the gene cluster that mediates the biosynthesis of squalestatin S1 (SQS1, also known as zaragozic acid A), a heavily oxidized fungal polyketide that offers potent cholesterol lowering activity by targeting squalene synthase (SS). SQS1 is composed of a 2,8-dioxobicyclic[3.2.1]octane-3,4,5-tricarboxyclic acid core that is connected to two lipophilic polyketide arms. These initial steps feature the priming of an unusual benzoic acid starter unit onto the highly reducing polyketide synthase clz14, followed by oxaloacetate extension and product release to generate a tricarboxylic acid containing product. The phenylalanine ammonia lyase (PAL) clz10 and the acyl-CoA ligase clz12 are involved in transforming phenylalanine into benzoyl-CoA. The citrate synthase-like protein clz17 is involved in connecting the C-alpha-carbons of the hexaketide chain and oxaloacetate to afford the tricarboxylic acid unit. The potential hydrolytic enzymes, clz11 and clz13, are in close proximity to pks2 and may participate in product release. On the other side, the tetraketide arm is synthesized by a the squalestatin tetraketide synthase clz2 and enzymatically esterified to the core in the last biosynthetic step, by the acetyltransferase clz6. The biosynthesis of the tetraketide must involve 3 rounds of chain extension. After the first and second rounds methyl-transfer occurs, and in all rounds of extension the ketoreductase and dehydratase are active. The enoyl reductase and C-MeT of clz2 are not active in the final round of extension. The acetyltransferase clz6 appears to have a broad substrate selectivity for its acyl CoA substrate, allowing the in vitro synthesis of novel squalestatins. The biosynthesis of SQS1 requires several oxidative steps likely performed by oxidoreductases clz3, clz15 and clz16. Finally, in support of the identification of the cluster as being responsible for SQS1 production, the cluster contains a gene encoding a putative squalene synthase (SS) clz20, suggesting a likely mechanism for self-resistance. The protein is Probable copper-dependent oxygenase clz3 of Cochliobolus lunatus (Filamentous fungus).